A 426-amino-acid polypeptide reads, in one-letter code: Glucose-6-phosphate isomerase (426 aa).

The Proton donor role is filled by Glu276. Active-site residues include His297 and Lys413.

Belongs to the GPI family.

The protein resides in the cytoplasm. It catalyses the reaction alpha-D-glucose 6-phosphate = beta-D-fructose 6-phosphate. The protein operates within carbohydrate biosynthesis; gluconeogenesis. Its pathway is carbohydrate degradation; glycolysis; D-glyceraldehyde 3-phosphate and glycerone phosphate from D-glucose: step 2/4. Its function is as follows. Catalyzes the reversible isomerization of glucose-6-phosphate to fructose-6-phosphate. The polypeptide is Glucose-6-phosphate isomerase (Mesoplasma florum (strain ATCC 33453 / NBRC 100688 / NCTC 11704 / L1) (Acholeplasma florum)).